A 360-amino-acid polypeptide reads, in one-letter code: Photosystem II protein D1 3 (360 aa).

The next 3 helical transmembrane spans lie at 29 to 46 (YVGWFGVLMIPTLLTATI), 118 to 133 (HFLLGISCYMGRQWEL), and 142 to 156 (WICVAYSAPLSAAFA). His118 lines the chlorophyll a pocket. Tyr126 provides a ligand contact to pheophytin a. Positions 170 and 189 each coordinate [CaMn4O5] cluster. A helical transmembrane segment spans residues 197–218 (FHMLGVAGVFGGSLFSAMHGSL). His198 serves as a coordination point for chlorophyll a. Residues His215 and 264–265 (SF) contribute to the a quinone site. His215 contacts Fe cation. Position 272 (His272) interacts with Fe cation. The chain crosses the membrane as a helical span at residues 274–288 (FLGAWPVVGIWFTSM). 4 residues coordinate [CaMn4O5] cluster: His332, Glu333, Asp342, and Ala344. The propeptide occupies 345–360 (AGEATPVALTAPSIHG).

This sequence belongs to the reaction center PufL/M/PsbA/D family. In terms of assembly, PSII is composed of 1 copy each of membrane proteins PsbA, PsbB, PsbC, PsbD, PsbE, PsbF, PsbH, PsbI, PsbJ, PsbK, PsbL, PsbM, PsbT, PsbX, PsbY, PsbZ, Psb30/Ycf12, peripheral proteins PsbO, CyanoQ (PsbQ), PsbU, PsbV and a large number of cofactors. It forms dimeric complexes. The cofactor is The D1/D2 heterodimer binds P680, chlorophylls that are the primary electron donor of PSII, and subsequent electron acceptors. It shares a non-heme iron and each subunit binds pheophytin, quinone, additional chlorophylls, carotenoids and lipids. D1 provides most of the ligands for the Mn4-Ca-O5 cluster of the oxygen-evolving complex (OEC). There is also a Cl(-1) ion associated with D1 and D2, which is required for oxygen evolution. The PSII complex binds additional chlorophylls, carotenoids and specific lipids.. Tyr-161 forms a radical intermediate that is referred to as redox-active TyrZ, YZ or Y-Z. In terms of processing, C-terminally processed by CtpA; processing is essential to allow assembly of the oxygen-evolving complex and thus photosynthetic growth.

It localises to the cellular thylakoid membrane. It carries out the reaction 2 a plastoquinone + 4 hnu + 2 H2O = 2 a plastoquinol + O2. Its function is as follows. Photosystem II (PSII) is a light-driven water:plastoquinone oxidoreductase that uses light energy to abstract electrons from H(2)O, generating O(2) and a proton gradient subsequently used for ATP formation. It consists of a core antenna complex that captures photons, and an electron transfer chain that converts photonic excitation into a charge separation. The D1/D2 (PsbA/PsbD) reaction center heterodimer binds P680, the primary electron donor of PSII as well as several subsequent electron acceptors. This Synechococcus sp. (strain ATCC 27144 / PCC 6301 / SAUG 1402/1) (Anacystis nidulans) protein is Photosystem II protein D1 3.